A 422-amino-acid polypeptide reads, in one-letter code: Acylglycerol kinase, mitochondrial (422 aa).

Lys6 bears the N6-acetyllysine mark. Residues 15–31 (TTAGLCLLTWGGHWLYG) form a hydrophobic region. The 142-residue stretch at 58-199 (AQVKKATVFL…LDVLQIKGEK (142 aa)) folds into the DAGKc domain. The segment at 249-271 (QASISYTGPTERPPNEPEETPVQ) is disordered.

It belongs to the AGK family. In terms of assembly, component of the TIM22 complex, which core is composed of TIMM22, associated with TIMM10 (TIMM10A and/or TIMM10B), TIMM9, AGK and TIMM29. Interacts with SMIM26. Mg(2+) serves as cofactor. As to expression, highly expressed in muscle, heart, kidney and brain.

Its subcellular location is the mitochondrion inner membrane. The protein resides in the mitochondrion intermembrane space. It catalyses the reaction a monoacylglycerol + ATP = a monoacyl-sn-glycero-3-phosphate + ADP + H(+). It carries out the reaction a 1,2-diacyl-sn-glycerol + ATP = a 1,2-diacyl-sn-glycero-3-phosphate + ADP + H(+). The catalysed reaction is an N-acylsphing-4-enine + ATP = an N-acylsphing-4-enine 1-phosphate + ADP + H(+). The enzyme catalyses 1-(9Z-octadecenoyl)-sn-glycerol + ATP = 1-(9Z-octadecenoyl)-sn-glycero-3-phosphate + ADP + H(+). It catalyses the reaction 1,2-di-(9Z-octadecenoyl)-sn-glycerol + ATP = 1,2-di-(9Z-octadecenoyl)-sn-glycero-3-phosphate + ADP + H(+). It carries out the reaction a 1-acyl-sn-glycerol + ATP = a 1-acyl-sn-glycero-3-phosphate + ADP + H(+). The catalysed reaction is 1-hexadecanoyl-sn-glycerol + ATP = 1-hexadecanoyl-sn-glycero-3-phosphate + ADP + H(+). The enzyme catalyses a 2-acylglycerol + ATP = a 2-acyl-sn-glycerol 3-phosphate + ADP + H(+). It catalyses the reaction 2-(5Z,8Z,11Z,14Z-eicosatetraenoyl)-glycerol + ATP = 2-(5Z,8Z,11Z,14Z-eicosatetraenoyl)-sn-glycero-3-phosphate + ADP + H(+). It carries out the reaction 1-(5Z,8Z,11Z,14Z-eicosatetraenoyl)-sn-glycerol + ATP = 1-(5Z,8Z,11Z,14Z-eicosatetraenoyl)-sn-glycero-3-phosphate + ADP + H(+). The catalysed reaction is N-(hexanoyl)sphing-4-enine + ATP = N-hexanoylsphing-4-enine 1-phosphate + ADP + H(+). It functions in the pathway lipid metabolism; glycerolipid metabolism. Its function is as follows. Lipid kinase that can phosphorylate both monoacylglycerol and diacylglycerol to form lysophosphatidic acid (LPA) and phosphatidic acid (PA), respectively. Does not phosphorylate sphingosine. Phosphorylates ceramide. Phosphorylates 1,2-dioleoylglycerol more rapidly than 2,3-dioleoylglycerol. Independently of its lipid kinase activity, acts as a component of the TIM22 complex. The TIM22 complex mediates the import and insertion of multi-pass transmembrane proteins into the mitochondrial inner membrane by forming a twin-pore translocase that uses the membrane potential as the external driving force. In the TIM22 complex, required for the import of a subset of metabolite carriers into mitochondria, such as ANT1/SLC25A4 and SLC25A24, while it is not required for the import of TIMM23. Overexpression increases the formation and secretion of LPA, resulting in transactivation of EGFR and activation of the downstream MAPK signaling pathway, leading to increased cell growth. The protein is Acylglycerol kinase, mitochondrial of Homo sapiens (Human).